A 179-amino-acid chain; its full sequence is Large ribosomal subunit protein uL5 (179 aa).

This sequence belongs to the universal ribosomal protein uL5 family. As to quaternary structure, part of the 50S ribosomal subunit; part of the 5S rRNA/L5/L18/L25 subcomplex. Contacts the 5S rRNA and the P site tRNA. Forms a bridge to the 30S subunit in the 70S ribosome.

Functionally, this is one of the proteins that bind and probably mediate the attachment of the 5S RNA into the large ribosomal subunit, where it forms part of the central protuberance. In the 70S ribosome it contacts protein S13 of the 30S subunit (bridge B1b), connecting the 2 subunits; this bridge is implicated in subunit movement. Contacts the P site tRNA; the 5S rRNA and some of its associated proteins might help stabilize positioning of ribosome-bound tRNAs. This is Large ribosomal subunit protein uL5 from Bordetella avium (strain 197N).